The chain runs to 115 residues: Large ribosomal subunit protein uL23 (115 aa).

This sequence belongs to the universal ribosomal protein uL23 family. In terms of assembly, part of the 50S ribosomal subunit. Contacts protein L29, and trigger factor when it is bound to the ribosome.

In terms of biological role, one of the early assembly proteins it binds 23S rRNA. One of the proteins that surrounds the polypeptide exit tunnel on the outside of the ribosome. Forms the main docking site for trigger factor binding to the ribosome. The chain is Large ribosomal subunit protein uL23 from Granulibacter bethesdensis (strain ATCC BAA-1260 / CGDNIH1).